We begin with the raw amino-acid sequence, 542 residues long: Chondroitin sulfate N-acetylgalactosaminyltransferase 2 (542 aa).

Over 1-13 the chain is Cytoplasmic; the sequence is MSRRGSILHSRTQ. A helical; Signal-anchor for type II membrane protein transmembrane segment spans residues 14–34; that stretch reads WLLLGLALLFSLVLFMYLLEC. Residues 35–542 are Lumenal-facing; sequence APQTDGNASL…AYRTNSETAG (508 aa). A glycan (N-linked (GlcNAc...) asparagine) is linked at Asn-41. Residues 59-105 are a coiled coil; it reads ALLQEQEEHYQTRATSLKRQIAQLKQELQDMSEKMRALQERKKLGAN. N-linked (GlcNAc...) asparagine glycosylation is present at Asn-333. Residues Asp-369 and His-486 each contribute to the a divalent metal cation site.

The protein belongs to the chondroitin N-acetylgalactosaminyltransferase family.

It localises to the golgi apparatus. The protein localises to the golgi stack membrane. It catalyses the reaction 3-O-(beta-D-GlcA-(1-&gt;3)-beta-D-Gal-(1-&gt;3)-beta-D-Gal-(1-&gt;4)-beta-D-Xyl)-L-seryl-[protein] + UDP-N-acetyl-alpha-D-galactosamine = 3-O-(beta-D-GalNAc-(1-&gt;4)-beta-D-GlcA-(1-&gt;3)-beta-D-Gal-(1-&gt;3)-beta-D-Gal-(1-&gt;4)-beta-D-Xyl)-L-seryl-[protein] + UDP + H(+). In terms of biological role, transfers 1,4-N-acetylgalactosamine (GalNAc) from UDP-GalNAc to the non-reducing end of glucuronic acid (GlcUA). Required for addition of the first GalNAc to the core tetrasaccharide linker and for elongation of chondroitin chains. This Mus musculus (Mouse) protein is Chondroitin sulfate N-acetylgalactosaminyltransferase 2 (Csgalnact2).